Here is a 2210-residue protein sequence, read N- to C-terminus: MEAERDLAEDAQWKKIQQNTFTRWANEHLKTIDRSINNLETDLSDGLRLIALIEVLSQKRMPKYNKRPTFRSQKLENVSVALKFLQDEGIKIVNIDSSDIVDCKLKLILGLIWTLILHYSISMPMWDGEDDKQLNGSGHTPKQRLLNWIHAKIPDLPINNFTNDWTTGKAVGALVDACAPGLCPDWELWDPKDAVQNASEAMGLADDWLNVRQLIKPEELVNPNVDEQSMMTYLSQYPNSKLKTGAPLRPKTNPNRVRAYGPGIEPIGPVVGAPANFTVETFSAGKGSVDVDIQGPNGEIEKADVRFNNDKNLTYTVSYIPKSEGSHKVAVKFSGRDIPKSPFPVKVEGHAGDASKVKVTGPGIQPNGVTIKKPTFFDILAKDAGRGVPEVIIIDPANHKTSVAAKVRQLENDTWRCEYVTALQGLHSVNVFYAGTPIPNSPFPVKVAPLSDARKVRASGRGLQATGVRVGDDADFKIYTEGAGEGEPEVRVIGPGGMNQNVMQSKVDGNTYECHYYPTKEGRYVIMVTFAGQEVAKSPFEVKVGPKKESSIVAYGPGLSSGVIGYPAAFVVETNGETGALGFTVAGPSQAEIECHDNGDGSALVKYHPTAVGEYAVHILCDNEDIPKSPFIAQILPRTDFHPELVKASGPGLEKNGVTINQPTSFTVDPSKAGNAPLDVVVQDVFGTKLPVELKNNPDGTKKVTYTPTSGVPHTVEVNYGGVSTPNSPHRVYVGVPVDAAKVQAFGPWLQPGVRPNAATHFNVDAREAGDAELKVKIIHEETKIEVPCRIIDNEDNTYSVEVIPPSKGAYTTTMTYGGQRVPLGEKVVVEQTVDVSKIKVDGLEPSVIMNAATDFMVDMSKVGSNIDSGKLSCAIFDPMGHVLPSKIVQGPTDDIFRIMYTPFEAGRHTIELMYDNIPVPGSPFVVNVKSGCDPARCKAYGPGLEKGLTNQKNKFTVETKGAGNGGLSLAIEGPSEAKMTCTDNRDGSCDVDYLATDPGEYDITIRFADKHIPGSPFRVLVEETVDPSKVKVYGPGIEHGQVRESVPTFFNVDVGEAGPGRIAVKLTNSEGIPVDNLRVEDKGNCIYAVHYVPPKAGSVLTCQVKFSEVEVPCSPFVMTVFPKSEPTKVKVKGVNEKKKTPASLPAEFEIDTKQAGQADINVAIKNPKGKAMQPRLEEVSTGTYVVSFVPDECGTYQCSIKYGDKEIEGSPFKLEAFPTGEAKKCKLVEQAPKIQTSGSQSHLKVDAREAGDGAVTCKITNKAGSEIVDIDVIEKDGFFDILYALNDPGDYDINVKFGGKDIPNGSFSIKAVESIEQYSHSEYIEEHTTKVVQQTTQSELVNGKSEITYRSVAFEKLPLPTTGGNVTAEVRMPSGKVDKPVIQDNRDGTVSVKYDPREEGSHELVVKYNGEPVQGSPFKFHVDSITSGYVTAYGPGLTHGVTGEPANFTISTKGASAGGLTMAVEGPSKADINYHDNKDGTVSVQYLPTAPGEYQVSVRFGDKHIKGSPYFAKITGEGRKRNQISVGSCSEVTMPGDITDDDLRALNASIQAPSGLEEPCFLKRMPTGNIGISFTPREIGEHLVSVKRLGKHINNSPFKVTVCEREVGDAKKVKVSGTGLKEGQTHADNIFSVDTRNAGFGGLSVSIEGPSKAEIQCTDKDDGTLNISYKPTEPGYYIVNLKFADHHVEGSPFTVKVAGEGSNRKREKIQRERDAVPITEIGSQCKLTFKMPGITSFDLAACVTSPSNVTEDAEIQEVEDGLYAVHFVPKELGVHTVSVRYSEMHIPGSPFQFTVGPLRDSGSHLVKAGGSGLERGVVGEAAEFNVWTREAGGGSLAISVEGPSKADIEFKDRKDGSCDVSYKVTEPGEYRVGLKFNDRHIPDSPFKVYVSPDAGDAHKLEVQQFPQGNIQADAPYQFMVRKNGAKGELDAKIVAPSGTDDDCFIQVIDGEMYSVRFYPRENGIHAIHVKFNGVHIPDSPFRIKVGKDVADPAAVHASGNGLDEVKTGHKADFIINTCNAGVGTLAVSIDGPSKVAMDCTEVEEGYKVRYTPLLPGEHYITVKYNNMHIVGSPFKVNATGDKLADEGAQETSTVIVETVQKVAKGGKNTGVHLPTFKSDASKVVSKGMGLKKAYIGKQNQFSISATDAGNNILYVGMYGPKGPCEEFHVKHAGHNNYNVQYLVRDRGQYVLLIKWGEEHIPGSPFQIDV.

Calponin-homology (CH) domains are found at residues Lys-15–Ser-120 and His-139–Leu-242. Filamin repeat units follow at residues Arg-249–Val-347, Gly-349–Val-447, Ala-448–Val-544, Gly-545–Ile-635, Arg-638–Val-734, Gly-735–Glu-831, Gln-832–Val-929, Lys-930–Val-1022, Glu-1023–Val-1121, Phe-1122–Ala-1217, Phe-1218–Ala-1312, Ser-1322–Val-1423, Asp-1424–Ile-1515, Thr-1516–Val-1603, Arg-1606–Val-1698, Ala-1699–Val-1796, Leu-1799–Val-1891, Pro-1893–Val-1986, Lys-1988–Ala-2079, and Thr-2116–Val-2210.

Belongs to the filamin family. In terms of assembly, interacts with Ten-m. In terms of tissue distribution, germline-specific in females (at protein level). Expressed in ovary.

Its subcellular location is the cytoplasm. The protein resides in the cytoskeleton. The protein localises to the cell membrane. Involved in the germline ring canal formation. May tether actin microfilament within the ovarian ring canal to the cell membrane. Contributes to actin microfilaments organization. The polypeptide is Filamin-A (cher) (Drosophila melanogaster (Fruit fly)).